The primary structure comprises 187 residues: Elongation factor P (187 aa).

This sequence belongs to the elongation factor P family.

It is found in the cytoplasm. The protein operates within protein biosynthesis; polypeptide chain elongation. In terms of biological role, involved in peptide bond synthesis. Stimulates efficient translation and peptide-bond synthesis on native or reconstituted 70S ribosomes in vitro. Probably functions indirectly by altering the affinity of the ribosome for aminoacyl-tRNA, thus increasing their reactivity as acceptors for peptidyl transferase. The sequence is that of Elongation factor P from Treponema denticola (strain ATCC 35405 / DSM 14222 / CIP 103919 / JCM 8153 / KCTC 15104).